The chain runs to 388 residues: Protein RMD5 homolog (388 aa).

Residues 112-144 form the LisH domain; it reads DTHIVNQIIANFFYRQGMFDIGDCFVAETGESE. A CTLH domain is found at 150–207; the sequence is SFVEMYRILEAMKRRDLEPALNWAVSNSDKLKEARSDLEMKLHSLHFLEIARGKNSKE. The RING-Gid-type zinc-finger motif lies at 330–374; it reads CPVSKEQSSDDNPPMMMSCGHVLCKQTINKMSKNGSKSSFKCPYC.

In terms of assembly, interacts with RANBPM.

It is found in the cytoplasm. In Arabidopsis thaliana (Mouse-ear cress), this protein is Protein RMD5 homolog.